The following is a 178-amino-acid chain: Conodipine-P2 (178 aa).

An N-terminal signal peptide occupies residues 1 to 24; sequence MKLLAPVLWAMAALGVTWLVAVDS. 3 positions are modified to 4-hydroxyproline: P38, P42, and P49. H54 is an active-site residue. A propeptide spans 98–130 (interchain peptide); that stretch reads KREVTSHRATSIAHSRLWKTALDQKSFLNRKAR. Q131 bears the Pyrrolidone carboxylic acid mark. P137 bears the 4-hydroxyproline mark.

This sequence belongs to the phospholipase A2 family. Group IX subfamily. As to quaternary structure, heterodimer of an alpha and a beta chain; probably disulfide-linked. It depends on Ca(2+) as a cofactor. Expressed by the venom duct.

It is found in the secreted. It carries out the reaction a 1,2-diacyl-sn-glycero-3-phosphocholine + H2O = a 1-acyl-sn-glycero-3-phosphocholine + a fatty acid + H(+). Catalyzes the calcium-dependent hydrolysis of the 2-acyl groups in 3-sn-phosphoglycerides. The polypeptide is Conodipine-P2 (Conus purpurascens (Purple cone)).